Here is a 684-residue protein sequence, read N- to C-terminus: MLKCICRVYSQPLAQMVTSPLFKHMGSAGTYTILPITNLRHLSTKNCPLKIKSNRSEPLQFGDFERQVPCSRKSGSSKNVQKRLYELRQLKTVLSETFGVTEYASFFESLRNALHINNCSENEKKKLLYDIILHQHELYPEVARKIGFYLPGEVHRWFWYHIPKSESFNHYLFLLKSDVLLFTSNYCTRFTNRLIKGTEMERQLATFQIFLHDETNIKFIMEKVLKLHTFDSLIALVNGLVKAKNFRFIKVFIQALLQKLEQHCYSGKDGAKQKNLRYVKFNNTLLYYLLKSGNVELFIKTFQEELKFIVSSGLLNHIDGNEHILNFPIHHYLNLLRISNRQEELFNVISCLQSSPLMKYKLFKEFLMGELIASFQAFRDPKLVCKYLLSSYSSKASANILNALGIWGWLYHSKSTTLTAPTLARELKNKNNILPNTMRIGSPVTVPILTELYRSLLSSSSVSLESGQFKNCLLDLYYKYKSFLSEEAHKYRYWRNDTGILNVFLNYIRFQAREPRLAYNVLLDFYSQPFAKKVVLTTTLCPFSIVAYKNHTLTQAELSELLQVMHKNGVPLTFKFCSAMVMHYVKMRDEKGARSWYNKILFGGFEIRHMALIQIIKDQGWPFPKNFDETLLTELVENNNIKEPTDSTLFTDEDMFEEDGKPRFNDDDVNKCTNIIRETLKSLN.

The N-terminal 56 residues, M1 to S56, are a transit peptide targeting the mitochondrion.

The protein belongs to the ATP22 family.

It localises to the mitochondrion inner membrane. In terms of biological role, translation factor specific for subunit 6 of the mitochondrial ATPase. Required for assembly of the CF(0) component of the ATPase. The chain is Mitochondrial translation factor ATP22 (ATP22) from Saccharomyces cerevisiae (strain YJM789) (Baker's yeast).